The sequence spans 452 residues: Enolase (452 aa).

Gln-167 contacts (2R)-2-phosphoglycerate. Residue Glu-209 is the Proton donor of the active site. The Mg(2+) site is built by Asp-250, Glu-307, and Asp-334. Residues Lys-359, Arg-388, Ser-389, and Lys-410 each coordinate (2R)-2-phosphoglycerate. The Proton acceptor role is filled by Lys-359.

This sequence belongs to the enolase family. Mg(2+) is required as a cofactor.

The protein resides in the cytoplasm. It localises to the secreted. It is found in the cell surface. The enzyme catalyses (2R)-2-phosphoglycerate = phosphoenolpyruvate + H2O. The protein operates within carbohydrate degradation; glycolysis; pyruvate from D-glyceraldehyde 3-phosphate: step 4/5. Functionally, catalyzes the reversible conversion of 2-phosphoglycerate (2-PG) into phosphoenolpyruvate (PEP). It is essential for the degradation of carbohydrates via glycolysis. This Mesomycoplasma hyopneumoniae (strain 232) (Mycoplasma hyopneumoniae) protein is Enolase.